We begin with the raw amino-acid sequence, 439 residues long: METFILSSDSDDDCPPPPKRRSIEGVPKSFDGDKKMRFSFDVTRDIILEDSEAPCSSNNIFTPSFRRDSNKTLLKTPVSLRRRSRSMNCMTPIVDTINEPPINQVCSAFVQKEIQLDDDDDDEKESSTEHADDDLNLRALLSPEKKKRKEKVDKRRPFGVEEVQNEFYGVYCLISRSERQCYKNRCYIGYTVDPNRRIMQHNGGRFKGGAKKTDSRGPWDMVCVVHGFPNHVAALRFEWAWQNPAVSKSLKEKQLKKERKETPFAYQLRIACELMNSEAFSRFALTFRWLNTKEELPFPISCTPPNHVKLRYGKVKKEMSLVPAKSADYVAMGECRLCGKDIEKLWGLVRCISQSCHSHFHSKCLAEHGLKNKNEYADQIYPLKSNCPICGHFYLWGDVVREQRRIIKVSTKCAEEFRNKVVRKDLPHREISSRLRLKK.

Disordered stretches follow at residues 1-28 (METFILSSDSDDDCPPPPKRRSIEGVPK) and 117-140 (DDDDDDEKESSTEHADDDLNLRAL). The segment covering 125 to 136 (ESSTEHADDDLN) has biased composition (basic and acidic residues). Positions 166 to 253 (EFYGVYCLIS…PAVSKSLKEK (88 aa)) constitute a GIY-YIG domain. The SLX1-type zinc finger occupies 335–390 (CRLCGKDIEKLWGLVRCISQSCHSHFHSKCLAEHGLKNKNEYADQIYPLKSNCPIC).

It belongs to the SLX1 family. Forms a heterodimer with him-18/slx-4. A divalent metal cation serves as cofactor.

The protein resides in the nucleus. Functionally, catalytic subunit of a heterodimeric structure-specific endonuclease that resolves DNA secondary structures generated during DNA repair and recombination. Has endonuclease activity towards branched DNA substrates, introducing single-strand cuts in duplex DNA close to junctions with ss-DNA (Potential). Has a preference for replication forks over 5' flap structures or Holliday junctions and shows much lower activity toward 3' flap structures. Required for proper crossover distribution through inhibition of crossover formation at the central region of chromosomes. The chain is Structure-specific endonuclease subunit SLX1 homolog from Caenorhabditis briggsae.